The following is a 507-amino-acid chain: ATP synthase subunit alpha, chloroplastic (507 aa).

170–177 is an ATP binding site; sequence GDRQTGKT.

This sequence belongs to the ATPase alpha/beta chains family. In terms of assembly, F-type ATPases have 2 components, CF(1) - the catalytic core - and CF(0) - the membrane proton channel. CF(1) has five subunits: alpha(3), beta(3), gamma(1), delta(1), epsilon(1). CF(0) has four main subunits: a, b, b' and c.

The protein resides in the plastid. It is found in the chloroplast thylakoid membrane. It catalyses the reaction ATP + H2O + 4 H(+)(in) = ADP + phosphate + 5 H(+)(out). Its function is as follows. Produces ATP from ADP in the presence of a proton gradient across the membrane. The alpha chain is a regulatory subunit. In Acorus calamus var. americanus (American sweet flag), this protein is ATP synthase subunit alpha, chloroplastic.